The primary structure comprises 1446 residues: Centrosomal protein of 164 kDa (1446 aa).

Residues 1-195 (MARRPILLGD…PPQGLKAAAC (195 aa)) form an interaction with ATRIP region. In terms of domain architecture, WW spans 56–89 (APLPKGWKPCQNITGDLYYFNFDTGQSIWDHPCD). Disordered regions lie at residues 106 to 132 (PGAIKKKDKKKKKEKKNKKDKETSKSP) and 159 to 185 (PPSALRGSQSVSLGSSADSGHLGEPTL). Residues 109–121 (IKKKDKKKKKEKK) show a composition bias toward basic residues. The segment covering 164–176 (RGSQSVSLGSSAD) has biased composition (polar residues). A Phosphoserine modification is found at Ser202. Disordered stretches follow at residues 217–238 (EETNEEDEEESDNQSVRSSSEL), 250–408 (GGNF…SFLG), 424–570 (GDTL…EPAA), and 830–849 (KRQEVEREHERKMDKMKEEH). The span at 218–228 (ETNEEDEEESD) shows a compositional bias: acidic residues. Residues 257-277 (ESPRTSQPDKKDVSLDSDADR) show a composition bias toward basic and acidic residues. A compositionally biased stretch (polar residues) spans 288 to 312 (GADSSVASANGSKSQGRGASPWNPQ). Composition is skewed to basic and acidic residues over residues 355–372 (KEGECRRESAAKEPKEAS) and 384–397 (SEIHGHLKDARHSG). A compositionally biased stretch (polar residues) spans 451–461 (SSIAEPQSKHT). Basic and acidic residues-rich tracts occupy residues 490–499 (PEWKEAEGPG) and 525–534 (ERAEEKHSQA). Residues 1143–1197 (EVLGNMRKNLNEETRHLDEMKSAMRKGHDLLKKKEEKLIQLESSLQEEVSDEDTL) are a coiled coil. Residues 1261 to 1287 (LGSLNSQPPPQGLGSQPPPPLFTSSLR) are disordered. The segment covering 1267 to 1281 (QPPPQGLGSQPPPPL) has biased composition (pro residues). A phosphoserine mark is found at Ser1369 and Ser1371.

Interacts (via N-terminus) with ATRIP. Interacts with ATM, ATR and MDC1. Interacts with XPA (via N-terminus) upon UV irradiation. Interacts with CEP83, CCDC92, TTBK2, DVL3, NPHP3 and weakly with NPHP4. Interacts with DZIP1.

It localises to the cytoplasm. It is found in the cytoskeleton. Its subcellular location is the microtubule organizing center. The protein localises to the centrosome. The protein resides in the centriole. It localises to the nucleus. In terms of biological role, plays a role in microtubule organization and/or maintenance for the formation of primary cilia (PC), a microtubule-based structure that protrudes from the surface of epithelial cells. Plays a critical role in G2/M checkpoint and nuclear divisions. A key player in the DNA damage-activated ATR/ATM signaling cascade since it is required for the proper phosphorylation of H2AX, RPA, CHEK2 and CHEK1. Plays a critical role in chromosome segregation, acting as a mediator required for the maintenance of genomic stability through modulation of MDC1, RPA and CHEK1. This chain is Centrosomal protein of 164 kDa, found in Mus musculus (Mouse).